The sequence spans 332 residues: Inositol 2-dehydrogenase 2 (332 aa).

It belongs to the Gfo/Idh/MocA family. As to quaternary structure, homotetramer.

It carries out the reaction myo-inositol + NAD(+) = scyllo-inosose + NADH + H(+). Involved in the oxidation of myo-inositol (MI) to 2-keto-myo-inositol (2KMI or 2-inosose). The polypeptide is Inositol 2-dehydrogenase 2 (Paenarthrobacter aurescens (strain TC1)).